Consider the following 250-residue polypeptide: GTP cyclohydrolase 1 type 2 homolog (250 aa).

Residues H63, H64, D100, H218, and E222 each coordinate a divalent metal cation.

This sequence belongs to the GTP cyclohydrolase I type 2/NIF3 family. In terms of assembly, homohexamer.

This Pyrococcus abyssi (strain GE5 / Orsay) protein is GTP cyclohydrolase 1 type 2 homolog.